Consider the following 434-residue polypeptide: CC-adding tRNA nucleotidyltransferase (434 aa).

19 to 22 (GAVR) is a CTP binding site. The Mg(2+) site is built by Asp-32 and Asp-34. CTP contacts are provided by residues 90-91 (RD), Asn-95, 130-139 (DHLRSLRGVR), and Arg-175.

Belongs to the tRNA nucleotidyltransferase/poly(A) polymerase family. Mg(2+) serves as cofactor.

It carries out the reaction a tRNA precursor + 2 CTP = a tRNA with a 3' CC end + 2 diphosphate. Functionally, tRNA nucleotidyltransferase involved in the synthesis of the tRNA CCA terminus. Adds the two cytidine residues to tRNA. This is CC-adding tRNA nucleotidyltransferase from Thermus thermophilus (strain ATCC BAA-163 / DSM 7039 / HB27).